The sequence spans 581 residues: Amino-acid acetyltransferase, mitochondrial (581 aa).

Residues 401–558 (FTLHNLIEDE…RIVGSEAVNI (158 aa)) form the N-acetyltransferase domain.

This sequence belongs to the acetyltransferase family.

The protein resides in the mitochondrion. The enzyme catalyses L-glutamate + acetyl-CoA = N-acetyl-L-glutamate + CoA + H(+). It participates in amino-acid biosynthesis; L-arginine biosynthesis; N(2)-acetyl-L-ornithine from L-glutamate: step 1/4. Functionally, N-acetylglutamate synthase involved in arginine biosynthesis. In Scheffersomyces stipitis (strain ATCC 58785 / CBS 6054 / NBRC 10063 / NRRL Y-11545) (Yeast), this protein is Amino-acid acetyltransferase, mitochondrial (ARG2).